The chain runs to 586 residues: METHLGWARSLEAVLSDRSALDAFQEWLIEYSSPQYLDLFFAIRAYERMALEGKPEKSQLSKSIYSKFLSSRTGNCEAIPKHFRAPIGEKLRHGTELEDRVFSHCSNFVQEFLRRQHEEFVGSEEFIEAFNKMSSTTADQLPGGSAHHSSHQNTMRRSSGTTSRKSAAQIATQLTAEALLKSKHDRHSKLGETKLEKMYPPTRQPYVCNATTSHNDSAVSSTFSGDTPEAHRMHSNRLRHIRDEQARENHGTMTLPRVEKASVDGQQWDHSSESGRRNFAMEITRKLLRHIDKVKLNDEMEKRIDDIEECRYTTIDMVNGTEPNDDLGKIDEDEELDDYLKMKMTDDSQKGSTNRSPKGPAGEPNKSGEGSKNTTLSPTNRAPAQLHNTIRVPRRKDYPRDTSASLKSHRHHQIDTNRMMSQSMCAPSYSSASSSYSRDSFAPAPTTRVNFAPGSSKSSQFYDSSGIGSMAPSAFSATSSLDYKDRRQHRKAPTPKKHSKIGKNLSNLITISYLGTDKIPVVTHVPNDGPMTLAEFKRHFALPNGAHQLFFKTECEDGSAPFQLLLIKDEHHLLPVFEGRIAAELR.

The tract at residues 1 to 135 is required for interaction with apr-1; it reads METHLGWARS…FIEAFNKMSS (135 aa). Residues 10-131 enclose the RGS domain; that stretch reads SLEAVLSDRS…GSEEFIEAFN (122 aa). Disordered stretches follow at residues 137–168, 344–442, and 478–501; these read TADQLPGGSAHHSSHQNTMRRSSGTTSRKSAA, MTDD…DSFA, and TSSLDYKDRRQHRKAPTPKKHSKI. 2 stretches are compositionally biased toward polar residues: residues 151–168 and 368–388; these read HQNTMRRSSGTTSRKSAA and GEGSKNTTLSPTNRAPAQLHN. Over residues 421–442 the composition is skewed to low complexity; that stretch reads SQSMCAPSYSSASSSYSRDSFA. Residues 486-501 show a composition bias toward basic residues; the sequence is RRQHRKAPTPKKHSKI. The DIX domain occupies 505-586; sequence LSNLITISYL…FEGRIAAELR (82 aa).

Interacts (via N-terminus) with apr-1 (via C-terminus). Interacts with bar-1 (via ARM repeats), gsk-3, and mig-5. Expressed in hypodermal cells (seam cells) V5 and V6, Q neuroblasts, ventral hypodermal cells P7/8 to P11/12, body wall muscle cells and neurons in the head, the tail and the ventral nerve cord.

The protein resides in the cell membrane. Its subcellular location is the nucleus. It is found in the cytoplasm. It localises to the cell cortex. In terms of biological role, works in parallel with axl-1 in negatively regulating bar-1 signaling in vulval precursor cells and Q neuroblasts. Inhibits Wnt signaling, which affects tissue specific expression of Hox genes, egl-5, lin-39 and mab-5. This in turn affects QR (postembryonic neuroblast) cell migration, vulval cell fate specification, and the development of sensory structures by the seam cell lineage. Has a role in alae V cell patterning, ray formation in the male tail and axon guidance. Does not affect B cell polarity. The polypeptide is Axin-like protein pry-1 (Caenorhabditis elegans).